A 59-amino-acid chain; its full sequence is Alpha-conotoxin CIA (59 aa).

Residues 1-16 (MFTVFLLVVLTITVVS) form the signal peptide. A propeptide spanning residues 17-42 (FPSDRASDGRDDEAKDERSDMYKSKR) is cleaved from the precursor. Disulfide bonds link cysteine 46-cysteine 51 and cysteine 47-cysteine 57. A Cysteine amide modification is found at cysteine 57.

The protein belongs to the conotoxin A superfamily. Expressed by the venom duct.

The protein resides in the secreted. Alpha-conotoxins act on postsynaptic membranes, they bind to the nicotinic acetylcholine receptors (nAChR) and thus inhibit them. This toxin blocks the rat muscle nAChRs alpha-1-beta-1-gamma-delta (CHRNA1-CHRNB1-CHRNG-CHRND) (IC(50)=5.7 nM) and the rat neuronal nAChR alpha-3-beta-2/CHRNA3-CHRNB2 (IC(50)=2060 nM). In vivo, intramuscular injection into zebrafish produces rapid flaccid paralysis. This is Alpha-conotoxin CIA from Conus catus (Cat cone).